The following is a 147-amino-acid chain: NADH-quinone oxidoreductase subunit A (147 aa).

3 helical membrane-spanning segments follow: residues isoleucine 11 to leucine 31, leucine 68 to valine 88, and leucine 93 to alanine 113.

It belongs to the complex I subunit 3 family. NDH-1 is composed of 14 different subunits. Subunits NuoA, H, J, K, L, M, N constitute the membrane sector of the complex.

It is found in the cell inner membrane. It catalyses the reaction a quinone + NADH + 5 H(+)(in) = a quinol + NAD(+) + 4 H(+)(out). NDH-1 shuttles electrons from NADH, via FMN and iron-sulfur (Fe-S) centers, to quinones in the respiratory chain. The immediate electron acceptor for the enzyme in this species is believed to be ubiquinone. Couples the redox reaction to proton translocation (for every two electrons transferred, four hydrogen ions are translocated across the cytoplasmic membrane), and thus conserves the redox energy in a proton gradient. The chain is NADH-quinone oxidoreductase subunit A from Nitrosospira multiformis (strain ATCC 25196 / NCIMB 11849 / C 71).